The primary structure comprises 142 residues: Large ribosomal subunit protein uL11 (142 aa).

This sequence belongs to the universal ribosomal protein uL11 family. In terms of assembly, part of the ribosomal stalk of the 50S ribosomal subunit. Interacts with L10 and the large rRNA to form the base of the stalk. L10 forms an elongated spine to which L12 dimers bind in a sequential fashion forming a multimeric L10(L12)X complex. One or more lysine residues are methylated.

Forms part of the ribosomal stalk which helps the ribosome interact with GTP-bound translation factors. This Acinetobacter baylyi (strain ATCC 33305 / BD413 / ADP1) protein is Large ribosomal subunit protein uL11.